The following is a 282-amino-acid chain: Protein-export membrane protein SecF (282 aa).

The next 6 helical transmembrane spans lie at 16–36 (MVAL…FNTV), 126–146 (QAIW…FVAF), 148–168 (IFIP…ITAA), 169–189 (FMDV…LMLI), 221–241 (GIIM…VFSL), and 253–273 (VLII…AGLL).

It belongs to the SecD/SecF family. SecF subfamily. Part of the protein translocation apparatus. Forms a complex with SecD.

It is found in the cell membrane. Its function is as follows. Involved in protein export. This is Protein-export membrane protein SecF from Methanolacinia petrolearia (strain DSM 11571 / OCM 486 / SEBR 4847) (Methanoplanus petrolearius).